A 37-amino-acid polypeptide reads, in one-letter code: Large ribosomal subunit protein bL36 (37 aa).

This sequence belongs to the bacterial ribosomal protein bL36 family.

In Synechococcus sp. (strain RCC307), this protein is Large ribosomal subunit protein bL36.